Reading from the N-terminus, the 339-residue chain is MQANGFSFGFYDEPNNLNGQDVGADSLPSVAIESDSLGHMLKYIPEKLSYARVSGLGHTFVQRELWDVKMQLMEQDDSIESDDKLKVLDGCNDLVPNVYEGGYKTWECSLDLANEIKKIDVVKNNLTTVLELGCGSAIPILSCFQEFYKHRIPCTLVFQDFNVDVLRYVTLPNLLLNWYFCTQEHDSSEKHGTIDVSPSLLQEFSDDLARTNIYCEFLCGCWSEEMQLLIQRTYGDHYFSLVLASETIYSLPSLENFLYMLLKNTKNLALVAGKDLYFGVGGSILEFNSRLQKLVDDPNSLKAIKTSTQNVGRSIVYWEKEFPPSNIDSSPQSPLPGSL.

Ser333 and Ser338 each carry phosphoserine.

This sequence belongs to the methyltransferase superfamily. METTL18 family.

The protein resides in the cytoplasm. It is found in the nucleus. It catalyses the reaction L-histidyl-[protein] + S-adenosyl-L-methionine = N(tele)-methyl-L-histidyl-[protein] + S-adenosyl-L-homocysteine + H(+). Functionally, protein-histidine N-methyltransferase that mediates methylation of target protein on His residues. This Schizosaccharomyces pombe (strain 972 / ATCC 24843) (Fission yeast) protein is Histidine protein methyltransferase 1.